The chain runs to 111 residues: Cytochrome b-c1 complex subunit 7 (111 aa).

Ala2 carries the post-translational modification N-acetylalanine. Position 19 is an N6-acetyllysine (Lys19). An N6-acetyllysine; alternate modification is found at Lys78. Lys78 carries the N6-succinyllysine; alternate modification. N6-acetyllysine is present on Lys83. Residue Lys88 is modified to N6-acetyllysine; alternate. At Lys88 the chain carries N6-succinyllysine; alternate. Lys96 bears the N6-acetyllysine mark.

The protein belongs to the UQCRB/QCR7 family. In terms of assembly, component of the ubiquinol-cytochrome c oxidoreductase (cytochrome b-c1 complex, complex III, CIII), a multisubunit enzyme composed of 11 subunits. The complex is composed of 3 respiratory subunits cytochrome b, cytochrome c1 and Rieske protein UQCRFS1, 2 core protein subunits UQCRC1/QCR1 and UQCRC2/QCR2, and 6 low-molecular weight protein subunits UQCRH/QCR6, UQCRB/QCR7, UQCRQ/QCR8, UQCR10/QCR9, UQCR11/QCR10 and subunit 9, the cleavage product of Rieske protein UQCRFS1. The complex exists as an obligatory dimer and forms supercomplexes (SCs) in the inner mitochondrial membrane with NADH-ubiquinone oxidoreductase (complex I, CI) and cytochrome c oxidase (complex IV, CIV), resulting in different assemblies (supercomplex SCI(1)III(2)IV(1) and megacomplex MCI(2)III(2)IV(2)).

It localises to the mitochondrion inner membrane. Component of the ubiquinol-cytochrome c oxidoreductase, a multisubunit transmembrane complex that is part of the mitochondrial electron transport chain which drives oxidative phosphorylation. The respiratory chain contains 3 multisubunit complexes succinate dehydrogenase (complex II, CII), ubiquinol-cytochrome c oxidoreductase (cytochrome b-c1 complex, complex III, CIII) and cytochrome c oxidase (complex IV, CIV), that cooperate to transfer electrons derived from NADH and succinate to molecular oxygen, creating an electrochemical gradient over the inner membrane that drives transmembrane transport and the ATP synthase. The cytochrome b-c1 complex catalyzes electron transfer from ubiquinol to cytochrome c, linking this redox reaction to translocation of protons across the mitochondrial inner membrane, with protons being carried across the membrane as hydrogens on the quinol. In the process called Q cycle, 2 protons are consumed from the matrix, 4 protons are released into the intermembrane space and 2 electrons are passed to cytochrome c. This is Cytochrome b-c1 complex subunit 7 (UQCRB) from Bos taurus (Bovine).